Here is a 133-residue protein sequence, read N- to C-terminus: Ribonuclease P protein component (133 aa).

The protein belongs to the RnpA family. As to quaternary structure, consists of a catalytic RNA component (M1 or rnpB) and a protein subunit.

The catalysed reaction is Endonucleolytic cleavage of RNA, removing 5'-extranucleotides from tRNA precursor.. Functionally, RNaseP catalyzes the removal of the 5'-leader sequence from pre-tRNA to produce the mature 5'-terminus. It can also cleave other RNA substrates such as 4.5S RNA. The protein component plays an auxiliary but essential role in vivo by binding to the 5'-leader sequence and broadening the substrate specificity of the ribozyme. This is Ribonuclease P protein component from Synechococcus sp. (strain JA-2-3B'a(2-13)) (Cyanobacteria bacterium Yellowstone B-Prime).